The primary structure comprises 256 residues: Thiazole synthase (256 aa).

The active-site Schiff-base intermediate with DXP is the Lys-95. 1-deoxy-D-xylulose 5-phosphate-binding positions include Gly-156, 182 to 183 (AG), and 204 to 205 (NT).

This sequence belongs to the ThiG family. Homotetramer. Forms heterodimers with either ThiH or ThiS.

The protein localises to the cytoplasm. The catalysed reaction is [ThiS sulfur-carrier protein]-C-terminal-Gly-aminoethanethioate + 2-iminoacetate + 1-deoxy-D-xylulose 5-phosphate = [ThiS sulfur-carrier protein]-C-terminal Gly-Gly + 2-[(2R,5Z)-2-carboxy-4-methylthiazol-5(2H)-ylidene]ethyl phosphate + 2 H2O + H(+). Its pathway is cofactor biosynthesis; thiamine diphosphate biosynthesis. Functionally, catalyzes the rearrangement of 1-deoxy-D-xylulose 5-phosphate (DXP) to produce the thiazole phosphate moiety of thiamine. Sulfur is provided by the thiocarboxylate moiety of the carrier protein ThiS. In vitro, sulfur can be provided by H(2)S. The chain is Thiazole synthase from Escherichia coli (strain K12 / MC4100 / BW2952).